The primary structure comprises 1363 residues: Vascular endothelial growth factor receptor 3 (1363 aa).

The signal sequence occupies residues 1–24 (MQPGAALNRRLWLCLGLLQGLANG). Residues 25-775 (YSMTPPTLNI…EGSEDKGSME (751 aa)) are Extracellular-facing. N-linked (GlcNAc...) asparagine glycosylation is found at Asn-33, Asn-104, Asn-166, Asn-251, Asn-299, and Asn-411. Ig-like C2-type domains are found at residues 44–118 (GDSL…YIKA), 151–213 (KDSM…WGDQ), 230–326 (YDIQ…TEVI), 331–415 (PFIS…ISLE), 422–552 (PHIH…FYVT), 555–671 (PDGF…KYLS), and 678–764 (PRLT…ASVA). 2 cysteine pairs are disulfide-bonded: Cys-51-Cys-111 and Cys-158-Cys-206. A disulfide bridge connects residues Cys-252 and Cys-310. Cystine bridges form between Cys-445-Cys-534, Cys-466-Cys-486, and Cys-578-Cys-653. 5 N-linked (GlcNAc...) asparagine glycosylation sites follow: Asn-515, Asn-527, Asn-582, Asn-594, and Asn-683. A disulfide bond links Cys-699 and Cys-751. Asn-758 is a glycosylation site (N-linked (GlcNAc...) asparagine). The chain crosses the membrane as a helical span at residues 776–796 (IVILIGTGVIAVFFWVLLLLI). Topologically, residues 797–1363 (FCNMKRPAHA…GSTFFADSNY (567 aa)) are cytoplasmic. 2 positions are modified to phosphotyrosine; by SRC: Tyr-830 and Tyr-833. Positions 845–1173 (LHLGRVLGHG…DLVEILGDLL (329 aa)) constitute a Protein kinase domain. ATP-binding positions include 851 to 859 (LGHGAFGKV) and Lys-879. Asp-1037 serves as the catalytic Proton acceptor. Phosphotyrosine; by autocatalysis and SRC is present on Tyr-1063. 4 positions are modified to phosphotyrosine; by autocatalysis: Tyr-1068, Tyr-1230, Tyr-1231, and Tyr-1265. A compositionally biased stretch (basic and acidic residues) spans 1289–1317 (SRHRQEGSFSRKDPGQHMDISRGHPDLQG). The segment at 1289 to 1330 (SRHRQEGSFSRKDPGQHMDISRGHPDLQGRRRRPTQGAQGGK) is disordered. Phosphotyrosine; by autocatalysis and SRC occurs at positions 1333 and 1337. The residue at position 1363 (Tyr-1363) is a Phosphotyrosine; by autocatalysis.

This sequence belongs to the protein kinase superfamily. Tyr protein kinase family. CSF-1/PDGF receptor subfamily. As to quaternary structure, interacts with VEGFC and VEGFD. Monomer in the absence of bound VEGFC or VEGFD. Homodimer in the presence of bound VEGFC or VEGFD. Can also form a heterodimer with KDR. Interacts with PTPN14; the interaction is enhanced by stimulation with VEGFC. Interacts with CRK, GRB2, PTK2/FAK1, SHC1, PIK3R1 and PTPN11/SHP-2. Identified in a complex with SRC and ITGB1. Identified in a complex with SRC and ITGB1. Autophosphorylated on tyrosine residues upon ligand binding. Autophosphorylation occurs in trans, i.e. one subunit of the dimeric receptor phosphorylates tyrosine residues on the other subunit. Phosphorylation in response to H(2)O(2) is mediated by a process that requires SRC and PRKCD activity. Phosphorylation at Tyr-1068 is required for autophosphorylation at additional tyrosine residues. Phosphorylation at Tyr-1063 and Tyr-1337 is important for interaction with CRK and subsequent activation of MAPK8. Phosphorylation at Tyr-1230, Tyr-1231 and Tyr-1337 is important for interaction with GRB2 and subsequent activation of the AKT1 and MAPK1/ERK2 and/or MAPK3/ERK1 signaling pathways. In response to endothelial cell adhesion onto collagen, can also be phosphorylated in the absence of FLT4 kinase activity by SRC.

The protein resides in the cell membrane. Its subcellular location is the cytoplasm. It is found in the nucleus. It carries out the reaction L-tyrosyl-[protein] + ATP = O-phospho-L-tyrosyl-[protein] + ADP + H(+). With respect to regulation, present in an inactive conformation in the absence of bound ligand. Binding of VEGFC or VEGFD leads to dimerization and activation by autophosphorylation on tyrosine residues. Tyrosine-protein kinase that acts as a cell-surface receptor for VEGFC and VEGFD, and plays an essential role in adult lymphangiogenesis and in the development of the vascular network and the cardiovascular system during embryonic development. Promotes proliferation, survival and migration of endothelial cells, and regulates angiogenic sprouting. Signaling by activated FLT4 leads to enhanced production of VEGFC, and to a lesser degree VEGFA, thereby creating a positive feedback loop that enhances FLT4 signaling. Modulates KDR signaling by forming heterodimers. Mediates activation of the MAPK1/ERK2, MAPK3/ERK1 signaling pathway, of MAPK8 and the JUN signaling pathway, and of the AKT1 signaling pathway. Phosphorylates SHC1. Mediates phosphorylation of PIK3R1, the regulatory subunit of phosphatidylinositol 3-kinase. Promotes phosphorylation of MAPK8 at 'Thr-183' and 'Tyr-185', and of AKT1 at 'Ser-473'. The protein is Vascular endothelial growth factor receptor 3 (Flt4) of Rattus norvegicus (Rat).